Consider the following 110-residue polypeptide: Movement protein TGB2 (110 aa).

At 1–10 (MSGAHHLTPP) the chain is on the cytoplasmic side. Residues 11 to 34 (TDYGKPVLAASIGISLALLVYTAT) traverse the membrane as a helical segment. The Lumenal portion of the chain corresponds to 35–76 (RSTLPHVGDNLHALPHGGRYVDGTKSISYFSPSASKTRDPFP). A helical transmembrane segment spans residues 77 to 92 (FAFLLILTLSGLILLL). Residues 93–110 (SRRRSNPHSCPSCGTPHA) lie on the Cytoplasmic side of the membrane.

The protein belongs to the Tymovirales TGBp2 protein family.

It is found in the host endoplasmic reticulum membrane. Plays a role in viral cell-to-cell propagation, by facilitating genome transport to neighboring plant cells through plasmosdesmata,. The protein is Movement protein TGB2 of Plantago asiatica (P1AMV).